Consider the following 213-residue polypeptide: Small ribosomal subunit protein eS1 (213 aa).

Belongs to the eukaryotic ribosomal protein eS1 family.

In Desulfurococcus amylolyticus (strain DSM 18924 / JCM 16383 / VKM B-2413 / 1221n) (Desulfurococcus kamchatkensis), this protein is Small ribosomal subunit protein eS1.